A 77-amino-acid polypeptide reads, in one-letter code: uncharacterized protein (77 aa).

The protein resides in the plastid. Its subcellular location is the cyanelle. This is an uncharacterized protein from Cyanophora paradoxa.